We begin with the raw amino-acid sequence, 225 residues long: NAD(P)H-quinone oxidoreductase subunit K, chloroplastic (225 aa).

Positions 43, 44, 108, and 139 each coordinate [4Fe-4S] cluster.

It belongs to the complex I 20 kDa subunit family. NDH is composed of at least 16 different subunits, 5 of which are encoded in the nucleus. The cofactor is [4Fe-4S] cluster.

Its subcellular location is the plastid. The protein localises to the chloroplast thylakoid membrane. The enzyme catalyses a plastoquinone + NADH + (n+1) H(+)(in) = a plastoquinol + NAD(+) + n H(+)(out). The catalysed reaction is a plastoquinone + NADPH + (n+1) H(+)(in) = a plastoquinol + NADP(+) + n H(+)(out). Functionally, NDH shuttles electrons from NAD(P)H:plastoquinone, via FMN and iron-sulfur (Fe-S) centers, to quinones in the photosynthetic chain and possibly in a chloroplast respiratory chain. The immediate electron acceptor for the enzyme in this species is believed to be plastoquinone. Couples the redox reaction to proton translocation, and thus conserves the redox energy in a proton gradient. This chain is NAD(P)H-quinone oxidoreductase subunit K, chloroplastic, found in Nandina domestica (Heavenly bamboo).